Reading from the N-terminus, the 202-residue chain is Small ribosomal subunit protein uS4 (202 aa).

A disordered region spans residues 22-43 (TRKNARRAYPPGQHGQNRRKRS). In terms of domain architecture, S4 RNA-binding spans 90-152 (MRLDNTVFRL…DKSRKLVQAN (63 aa)).

Belongs to the universal ribosomal protein uS4 family. In terms of assembly, part of the 30S ribosomal subunit. Contacts protein S5. The interaction surface between S4 and S5 is involved in control of translational fidelity.

One of the primary rRNA binding proteins, it binds directly to 16S rRNA where it nucleates assembly of the body of the 30S subunit. Its function is as follows. With S5 and S12 plays an important role in translational accuracy. This Gloeothece citriformis (strain PCC 7424) (Cyanothece sp. (strain PCC 7424)) protein is Small ribosomal subunit protein uS4.